We begin with the raw amino-acid sequence, 304 residues long: MASRQPEVPPALAPSGPLSKMSLPIGMCRRAFSYDDALEDPAPMTPPPSDMGSIPWKPVIPERKYQHLDKTEEGAASVSSLAVTPSTATDSSDKAPVVKAKATHIIMNSLITKQTQESIQRFEQQAGLRDAGYTPHKGLTTEETKYLRVAEALHKLKLQSGETTREEKHPASAQSSPSSTPHSSPKQKSRGWFPSGSSTALPAPNPHSMDPGGGNDRNSADKWSLFGPRPLQKSDSGFAIQAYKGAPKPSPMEVMRAQATRAGEDPAVFKPPKMDVPVVEGKKQPPRTHNLKPRDLNVLTPTGF.

5 disordered regions span residues Met1–Ser22, Leu38–Lys57, Asp69–Pro96, Gln159–Leu231, and Ala262–Phe304. Thr45 is modified (phosphothreonine). Positions Leu68–Val78 match the Flavin-containing monooxygenase motif motif. Polar residues predominate over residues Ser77–Asp90. Over residues Ala171–Lys186 the composition is skewed to low complexity. Phosphoserine occurs at positions 183 and 184.

It belongs to the P33MONOX family. In terms of assembly, interacts with NELFB, NOL12 and PRNP.

The protein resides in the cytoplasm. In terms of biological role, potential NADPH-dependent oxidoreductase. May be involved in the regulation of neuronal survival, differentiation and axonal outgrowth. The chain is Putative monooxygenase p33MONOX (P33monox) from Rattus norvegicus (Rat).